Reading from the N-terminus, the 208-residue chain is Uracil phosphoribosyltransferase (208 aa).

Residues Arg78, Arg103, and 130–138 contribute to the 5-phospho-alpha-D-ribose 1-diphosphate site; that span reads DPMLATGGT. Uracil contacts are provided by residues Ile193 and 198-200; that span reads GDA. Asp199 provides a ligand contact to 5-phospho-alpha-D-ribose 1-diphosphate.

This sequence belongs to the UPRTase family. Mg(2+) is required as a cofactor.

The catalysed reaction is UMP + diphosphate = 5-phospho-alpha-D-ribose 1-diphosphate + uracil. Its pathway is pyrimidine metabolism; UMP biosynthesis via salvage pathway; UMP from uracil: step 1/1. Allosterically activated by GTP. In terms of biological role, catalyzes the conversion of uracil and 5-phospho-alpha-D-ribose 1-diphosphate (PRPP) to UMP and diphosphate. The polypeptide is Uracil phosphoribosyltransferase (Oleidesulfovibrio alaskensis (strain ATCC BAA-1058 / DSM 17464 / G20) (Desulfovibrio alaskensis)).